Here is a 181-residue protein sequence, read N- to C-terminus: Large ribosomal subunit protein uL5 (181 aa).

It belongs to the universal ribosomal protein uL5 family. In terms of assembly, part of the 50S ribosomal subunit; contacts the 5S rRNA and probably tRNA. Forms a bridge to the 30S subunit in the 70S ribosome.

In terms of biological role, this is one of the proteins that bind and probably mediate the attachment of the 5S RNA into the large ribosomal subunit, where it forms part of the central protuberance. In the 70S ribosome it contacts protein S13 of the 30S subunit (bridge B1b), connecting the 2 subunits; this bridge is implicated in subunit movement. May contact the P site tRNA; the 5S rRNA and some of its associated proteins might help stabilize positioning of ribosome-bound tRNAs. This is Large ribosomal subunit protein uL5 from Methanococcus maripaludis (strain C6 / ATCC BAA-1332).